The following is a 424-amino-acid chain: Vasopressin V1b receptor (424 aa).

Residues 1–22 (MDSGPLWDANPTPRGTLSAPNA) are disordered. The Extracellular segment spans residues 1-35 (MDSGPLWDANPTPRGTLSAPNATTPWLGRDEELAK). Residues 13-22 (PRGTLSAPNA) show a composition bias toward polar residues. A glycan (N-linked (GlcNAc...) asparagine) is linked at asparagine 21. Residues 36-59 (VEIGVLATVLVLATGGNLAVLLTL) form a helical membrane-spanning segment. Over 60–71 (GQLGRKRSRMHL) the chain is Cytoplasmic. The chain crosses the membrane as a helical span at residues 72 to 93 (FVLHLALTDLAVALFQVLPQLL). Topologically, residues 94 to 108 (WDITYRFQGPDLLCR) are extracellular. The cysteines at positions 107 and 186 are disulfide-linked. The chain crosses the membrane as a helical span at residues 109 to 130 (AVKYLQVLSMFASTYMLLAMTL). Residues 131 to 151 (DRYLAVCHPLRSLQQPGQSTY) lie on the Cytoplasmic side of the membrane. A helical transmembrane segment spans residues 152–173 (LLIAAPWLLAAIFSLPQVFIFS). At 174 to 201 (LREVIQGSGVLDCWADFGFPWGPRAYLT) the chain is on the extracellular side. Residues 202-222 (WTTLAIFVLPVTMLTACYSLI) form a helical membrane-spanning segment. The Cytoplasmic segment spans residues 223-283 (CHEICKNLKV…RAKIRTVKMT (61 aa)). A helical transmembrane segment spans residues 284 to 303 (FVIVLAYIACWAPFFSVQMW). Topologically, residues 304-321 (SVWDKNAPDEDSTNVAFT) are extracellular. The chain crosses the membrane as a helical span at residues 322-341 (ISMLLGNLNSCCNPWIYMGF). Residues 342-424 (NSHLLPRPLR…GEGTAETIIF (83 aa)) are Cytoplasmic-facing. The interval 398–417 (SGRPRPEESPRDLELADGEG) is disordered. Residues 401–411 (PRPEESPRDLE) show a composition bias toward basic and acidic residues.

It belongs to the G-protein coupled receptor 1 family. Vasopressin/oxytocin receptor subfamily.

The protein localises to the cell membrane. Receptor for arginine vasopressin. The activity of this receptor is mediated by G proteins which activate a phosphatidyl-inositol-calcium second messenger system. Functionally, (Microbial infection) During SARS coronavirus-2/SARS-CoV-2 infection, may recognize and internalize the complex formed by AVP/Arg-vasopressin, SARS-CoV-2 spike protein and secreted ACE2 through DNM2/dynamin 2-dependent endocytosis. This is Vasopressin V1b receptor from Homo sapiens (Human).